Here is a 227-residue protein sequence, read N- to C-terminus: Cytochrome c oxidase subunit 2 (227 aa).

Over 1 to 14 (MPYPLQLGFQDATS) the chain is Mitochondrial intermembrane. A helical membrane pass occupies residues 15 to 45 (PIMEELLHFHDHTLMIVFLISSLVLYIITLM). The Mitochondrial matrix segment spans residues 46–59 (LTTKLTHTSTMDAQ). A helical transmembrane segment spans residues 60 to 87 (EVETVWTILPAVILILIALPSLRILYMM). Topologically, residues 88–227 (DEINNPLLTI…HFEDWSTSML (140 aa)) are mitochondrial intermembrane. H161, C196, E198, C200, H204, and M207 together coordinate Cu cation. Mg(2+) is bound at residue E198.

It belongs to the cytochrome c oxidase subunit 2 family. In terms of assembly, component of the cytochrome c oxidase (complex IV, CIV), a multisubunit enzyme composed of 14 subunits. The complex is composed of a catalytic core of 3 subunits MT-CO1, MT-CO2 and MT-CO3, encoded in the mitochondrial DNA, and 11 supernumerary subunits COX4I, COX5A, COX5B, COX6A, COX6B, COX6C, COX7A, COX7B, COX7C, COX8 and NDUFA4, which are encoded in the nuclear genome. The complex exists as a monomer or a dimer and forms supercomplexes (SCs) in the inner mitochondrial membrane with NADH-ubiquinone oxidoreductase (complex I, CI) and ubiquinol-cytochrome c oxidoreductase (cytochrome b-c1 complex, complex III, CIII), resulting in different assemblies (supercomplex SCI(1)III(2)IV(1) and megacomplex MCI(2)III(2)IV(2)). Found in a complex with TMEM177, COA6, COX18, COX20, SCO1 and SCO2. Interacts with TMEM177 in a COX20-dependent manner. Interacts with COX20. Interacts with COX16. Cu cation is required as a cofactor.

It is found in the mitochondrion inner membrane. The enzyme catalyses 4 Fe(II)-[cytochrome c] + O2 + 8 H(+)(in) = 4 Fe(III)-[cytochrome c] + 2 H2O + 4 H(+)(out). Its function is as follows. Component of the cytochrome c oxidase, the last enzyme in the mitochondrial electron transport chain which drives oxidative phosphorylation. The respiratory chain contains 3 multisubunit complexes succinate dehydrogenase (complex II, CII), ubiquinol-cytochrome c oxidoreductase (cytochrome b-c1 complex, complex III, CIII) and cytochrome c oxidase (complex IV, CIV), that cooperate to transfer electrons derived from NADH and succinate to molecular oxygen, creating an electrochemical gradient over the inner membrane that drives transmembrane transport and the ATP synthase. Cytochrome c oxidase is the component of the respiratory chain that catalyzes the reduction of oxygen to water. Electrons originating from reduced cytochrome c in the intermembrane space (IMS) are transferred via the dinuclear copper A center (CU(A)) of subunit 2 and heme A of subunit 1 to the active site in subunit 1, a binuclear center (BNC) formed by heme A3 and copper B (CU(B)). The BNC reduces molecular oxygen to 2 water molecules using 4 electrons from cytochrome c in the IMS and 4 protons from the mitochondrial matrix. The protein is Cytochrome c oxidase subunit 2 (MT-CO2) of Dasypus novemcinctus (Nine-banded armadillo).